We begin with the raw amino-acid sequence, 334 residues long: Protein FAM50B (334 aa).

Ala2 carries the N-acetylalanine modification. Residues 122–175 form a disordered region; that stretch reads FTLDEEEGDQEDSRQAESAEAHSAGAKKNLGKNPDVDTSFLPDREREEEENRLR. Composition is skewed to basic and acidic residues over residues 132-141 and 163-175; these read EDSRQAESAE and PDRE…NRLR.

It belongs to the FAM50 family. Widely expressed. Abundant in testis, where it is expressed in seminiferous tubules, not in the interstitium. At the cellular level, expressed in primary spermatocytes and round spermatids, but not detectable in spermatogonia, elongating spermatids, mature spermatozoa, Sertoli cells or Leydig cells.

This chain is Protein FAM50B (Fam50b), found in Mus musculus (Mouse).